Consider the following 253-residue polypeptide: Sugar fermentation stimulation protein homolog (253 aa).

It belongs to the SfsA family.

This is Sugar fermentation stimulation protein homolog from Prochlorococcus marinus (strain NATL1A).